The chain runs to 158 residues: Toxin Tse2 (158 aa).

Forms a heterotetramer with Tsi2 consisting of two Tse2 dimers and two Tsi2 dimers. Formation of the complex inactivates Tse2 enzymatic activity.

It localises to the secreted. Its function is as follows. Toxin secreted by the H1 type VI (H1-T6SS) secretion system into the cytoplasm of recipient cells. Acts likely as a NAD-dependent cytotoxin towards both prokaryotic and eukaryotic cells. This is Toxin Tse2 from Pseudomonas aeruginosa (strain ATCC 15692 / DSM 22644 / CIP 104116 / JCM 14847 / LMG 12228 / 1C / PRS 101 / PAO1).